The primary structure comprises 451 residues: L,D-transpeptidase 5 (451 aa).

A L,D-TPase catalytic domain is found at 263–384; sequence QVVKAEVSSH…AVYGDPVEVT (122 aa). Substrate is bound by residues Y323 and 337–338; that span reads NG. H342 (proton donor/acceptor) is an active-site residue. C360 (nucleophile) is an active-site residue. N362 is a substrate binding site. The interval 417 to 451 is disordered; it reads AAKPAATQIPVTAPVTPSDAPTPSGTPTTTNGPGG. The segment covering 437-451 has biased composition (low complexity); it reads PTPSGTPTTTNGPGG.

It participates in cell wall biogenesis; peptidoglycan biosynthesis. With respect to regulation, in contrast to other LDT paralogs, LdtMt5 is not inactivated by the beta-lactam carbapenems; beta-lactam carbapenems form covalent adducts with other LDT paralogs but the formation of covalent adducts was not detected for LdtMt5. Generates 3-&gt;3 cross-links in peptidoglycan, catalyzing the cleavage of the mDap(3)-D-Ala(4) bond of a tetrapeptide donor stem and the formation of a bond between the carbonyl of mDap(3) of the donor stem and the side chain of mDap(3) of the acceptor stem. Is specific for donor substrates containing a stem tetrapeptide since it cannot use pentapeptide stems. This Mycobacterium tuberculosis (strain ATCC 25618 / H37Rv) protein is L,D-transpeptidase 5 (lprQ).